The sequence spans 60 residues: Mastoparan-VT4 (60 aa).

The first 27 residues, 1–27 (MKNPILILFTAFIALLGFFGMSAEALA), serve as a signal peptide directing secretion. AXPX repeat units lie at residues 27–30 (ADPK), 31–34 (ADPL), 35–38 (AGPN), and 41–44 (ADPE). Residues 28 to 45 (DPKADPLAGPNPDADPEA) constitute a propeptide that is removed on maturation. Leucine 59 is subject to Leucine amide.

Belongs to the MCD family. Mastoparan subfamily. In terms of tissue distribution, expressed by the venom gland.

The protein resides in the secreted. The synthetic peptide shows antimicrobial activities against Gram-negative bacteria (but not against all strains tested), Gram-positive bacteria (not all strains tested) and the fungi C.albicans and C.parapsilosis. Exhibits little hemolytic activity against washed human erythrocytes. The sequence is that of Mastoparan-VT4 from Vespa tropica (Greater banded hornet).